A 95-amino-acid chain; its full sequence is Protein TusB (95 aa).

The protein belongs to the DsrH/TusB family. As to quaternary structure, heterohexamer, formed by a dimer of trimers. The hexameric TusBCD complex contains 2 copies each of TusB, TusC and TusD. The TusBCD complex interacts with TusE.

It localises to the cytoplasm. Its function is as follows. Part of a sulfur-relay system required for 2-thiolation of 5-methylaminomethyl-2-thiouridine (mnm(5)s(2)U) at tRNA wobble positions. The polypeptide is Protein TusB (Salmonella agona (strain SL483)).